The chain runs to 151 residues: Protein A151R (151 aa).

This sequence belongs to the asfivirus A151R family. In terms of assembly, monomer. Homodimer. Interacts with protein B119L. Interacts with membrane protein E248R. Requires Zn(2+) as cofactor.

May participate in a redox cascade for the formation of disulfide bonds in viral proteins. In Ornithodoros (relapsing fever ticks), this protein is Protein A151R.